Consider the following 352-residue polypeptide: Protein RecA (352 aa).

67–74 (GPESSGKT) provides a ligand contact to ATP.

Belongs to the RecA family.

It is found in the cytoplasm. Functionally, can catalyze the hydrolysis of ATP in the presence of single-stranded DNA, the ATP-dependent uptake of single-stranded DNA by duplex DNA, and the ATP-dependent hybridization of homologous single-stranded DNAs. It interacts with LexA causing its activation and leading to its autocatalytic cleavage. This is Protein RecA from Aggregatibacter actinomycetemcomitans (Actinobacillus actinomycetemcomitans).